The primary structure comprises 1267 residues: BOS complex subunit NOMO2 (1267 aa).

Residues 1–31 form the signal peptide; that stretch reads MLVGQGAGLLGPAVVTAAVVLLLSGVGPAHG. At 32-1155 the chain is on the lumenal side; sequence SEDIVVGCGG…NPTRKLPEQD (1124 aa). N-linked (GlcNAc...) asparagine glycosylation is found at Asn50, Asn218, and Asn618. A helical transmembrane segment spans residues 1156–1176; it reads IAQGSYIALPLTLLVLLAGYN. The Cytoplasmic segment spans residues 1177 to 1267; sequence HDKLIPLLLQ…LETTATCIHY (91 aa). Positions 1198-1219 are disordered; the sequence is GQAASDNSGPEDAKRQAKKQKT.

Component of the back of Sec61 (BOS) complex, composed of NCLN/Nicalin, NOMO (NOMO1, NOMO2 or NOMO3) and TMEM147. The BOS complex is part of the multi-pass translocon (MPT) complex, composed of three subcomplexes, the GEL complex (composed of RAB5IF/OPTI and TMCO1), the BOS complex (composed of NCLN/Nicalin, NOMO and TMEM147) and the PAT complex (composed of WDR83OS/Asterix and CCDC47). The MPT complex associates with the SEC61 complex. Due to the strong similarity between NOMO1, NOMO2 and NOMO3, similar interaction pattern probably occur for the three gene copies. Highly expressed in pancreas and skeletal muscle and, at lower levels, in heart.

The protein resides in the endoplasmic reticulum membrane. Component of the multi-pass translocon (MPT) complex that mediates insertion of multi-pass membrane proteins into the lipid bilayer of membranes. The MPT complex takes over after the SEC61 complex: following membrane insertion of the first few transmembrane segments of proteins by the SEC61 complex, the MPT complex occludes the lateral gate of the SEC61 complex to promote insertion of subsequent transmembrane regions. The polypeptide is BOS complex subunit NOMO2 (NOMO2) (Homo sapiens (Human)).